The chain runs to 85 residues: uncharacterized protein (85 aa).

This sequence belongs to the SF3B5 family.

This is an uncharacterized protein from Schizosaccharomyces pombe (strain 972 / ATCC 24843) (Fission yeast).